Reading from the N-terminus, the 274-residue chain is Mitochondrial outer membrane protein porin 4 (274 aa).

Gly2 carries the N-acetylglycine modification. Ser76 is subject to Phosphoserine.

It belongs to the eukaryotic mitochondrial porin (TC 1.B.8.1) family. In terms of tissue distribution, widely expressed.

It localises to the cell membrane. The protein localises to the mitochondrion outer membrane. In terms of biological role, forms a channel through the mitochondrial outer membrane that allows diffusion of small hydrophilic molecules. The channel adopts an open conformation at low or zero membrane potential and a closed conformation at potentials above 30-40 mV. The open state has a weak anion selectivity whereas the closed state is cation-selective. Involved in plant growth and development at the vegetative and reproductive stages. Is important for leaf and pollen development and mitochondrial membrane potential steady state. May be involved in disease resistance. This chain is Mitochondrial outer membrane protein porin 4 (VDAC4), found in Arabidopsis thaliana (Mouse-ear cress).